The following is a 717-amino-acid chain: Fatty acid oxidation complex subunit alpha (717 aa).

Residues 1 to 190 are enoyl-CoA hydratase/isomerase; it reads MIHAGNAITV…KDGAVDAVVS (190 aa). D298 is a binding site for substrate. Residues 313-717 form a 3-hydroxyacyl-CoA dehydrogenase region; sequence HPVNQAAVLG…MAENNKKFYG (405 aa). Residues M326, D345, 402-404, K409, and S431 contribute to the NAD(+) site; that span reads VTE. The active-site For 3-hydroxyacyl-CoA dehydrogenase activity is the H452. Residue N455 participates in NAD(+) binding. N502 is a substrate binding site.

It in the N-terminal section; belongs to the enoyl-CoA hydratase/isomerase family. This sequence in the C-terminal section; belongs to the 3-hydroxyacyl-CoA dehydrogenase family. Heterotetramer of two alpha chains (FadB) and two beta chains (FadA).

It carries out the reaction a (3S)-3-hydroxyacyl-CoA + NAD(+) = a 3-oxoacyl-CoA + NADH + H(+). The enzyme catalyses a (3S)-3-hydroxyacyl-CoA = a (2E)-enoyl-CoA + H2O. The catalysed reaction is a 4-saturated-(3S)-3-hydroxyacyl-CoA = a (3E)-enoyl-CoA + H2O. It catalyses the reaction (3S)-3-hydroxybutanoyl-CoA = (3R)-3-hydroxybutanoyl-CoA. It carries out the reaction a (3Z)-enoyl-CoA = a 4-saturated (2E)-enoyl-CoA. The enzyme catalyses a (3E)-enoyl-CoA = a 4-saturated (2E)-enoyl-CoA. It participates in lipid metabolism; fatty acid beta-oxidation. Involved in the aerobic and anaerobic degradation of long-chain fatty acids via beta-oxidation cycle. Catalyzes the formation of 3-oxoacyl-CoA from enoyl-CoA via L-3-hydroxyacyl-CoA. It can also use D-3-hydroxyacyl-CoA and cis-3-enoyl-CoA as substrate. The protein is Fatty acid oxidation complex subunit alpha of Acinetobacter baylyi (strain ATCC 33305 / BD413 / ADP1).